A 495-amino-acid chain; its full sequence is ATP synthase subunit beta, chloroplastic (495 aa).

Position 172–179 (172–179 (GGAGVGKT)) interacts with ATP.

The protein belongs to the ATPase alpha/beta chains family. In terms of assembly, F-type ATPases have 2 components, CF(1) - the catalytic core - and CF(0) - the membrane proton channel. CF(1) has five subunits: alpha(3), beta(3), gamma(1), delta(1), epsilon(1). CF(0) has four main subunits: a(1), b(1), b'(1) and c(9-12).

The protein localises to the plastid. The protein resides in the chloroplast thylakoid membrane. It catalyses the reaction ATP + H2O + 4 H(+)(in) = ADP + phosphate + 5 H(+)(out). Produces ATP from ADP in the presence of a proton gradient across the membrane. The catalytic sites are hosted primarily by the beta subunits. In Scilla messeniaca (Greek squill), this protein is ATP synthase subunit beta, chloroplastic.